Here is a 2293-residue protein sequence, read N- to C-terminus: Protein Ycf2 (2293 aa).

1642 to 1649 (GSIGTGRS) is a binding site for ATP.

It belongs to the Ycf2 family.

The protein resides in the plastid. The protein localises to the chloroplast stroma. Probable ATPase of unknown function. Its presence in a non-photosynthetic plant (Epifagus virginiana) and experiments in tobacco indicate that it has an essential function which is probably not related to photosynthesis. In Platanus occidentalis (Sycamore), this protein is Protein Ycf2.